The sequence spans 210 residues: Chloramphenicol acetyltransferase (210 aa).

His79 is an active-site residue.

Belongs to the transferase hexapeptide repeat family.

The enzyme catalyses chloramphenicol + acetyl-CoA = chloramphenicol 3-acetate + CoA. Functionally, this enzyme is an effector of chloramphenicol resistance in bacteria. In Escherichia coli, this protein is Chloramphenicol acetyltransferase (catB2).